The chain runs to 103 residues: Histone H4.2 (103 aa).

The segment covering 1 to 14 (MSGRGKGGKGLGKG) has biased composition (gly residues). A disordered region spans residues 1–20 (MSGRGKGGKGLGKGGAKRHR). K6 is subject to N6-acetyl-N6-methyllysine; alternate. 3 positions are modified to N6-methyllysine; alternate: K6, K9, and K13. K13 is modified (N6-acetyl-N6-methyllysine; alternate). The DNA-binding element occupies 17 to 21 (KRHRK). K92 bears the N6-glutaryllysine mark.

The protein belongs to the histone H4 family. The nucleosome is a histone octamer containing two molecules each of H2A, H2B, H3 and H4 assembled in one H3-H4 heterotetramer and two H2A-H2B heterodimers. The octamer wraps approximately 147 bp of DNA. In terms of processing, glutarylation at Lys-92 (H4K91glu) destabilizes nucleosomes by promoting dissociation of the H2A-H2B dimers from nucleosomes.

It is found in the nucleus. The protein localises to the chromosome. In terms of biological role, core component of nucleosome. Nucleosomes wrap and compact DNA into chromatin, limiting DNA accessibility to the cellular machineries which require DNA as a template. Histones thereby play a central role in transcription regulation, DNA repair, DNA replication and chromosomal stability. DNA accessibility is regulated via a complex set of post-translational modifications of histones, also called histone code, and nucleosome remodeling. This chain is Histone H4.2 (hhfB), found in Emericella nidulans (strain FGSC A4 / ATCC 38163 / CBS 112.46 / NRRL 194 / M139) (Aspergillus nidulans).